The following is a 126-amino-acid chain: Large ribosomal subunit protein bL12 (126 aa).

This sequence belongs to the bacterial ribosomal protein bL12 family. Homodimer. Part of the ribosomal stalk of the 50S ribosomal subunit. Forms a multimeric L10(L12)X complex, where L10 forms an elongated spine to which 2 to 4 L12 dimers bind in a sequential fashion. Binds GTP-bound translation factors.

Forms part of the ribosomal stalk which helps the ribosome interact with GTP-bound translation factors. Is thus essential for accurate translation. The chain is Large ribosomal subunit protein bL12 from Streptococcus pyogenes serotype M28 (strain MGAS6180).